The primary structure comprises 492 residues: Putative methyl-accepting chemotaxis AlkN (492 aa).

Transmembrane regions (helical) follow at residues 9 to 29 and 159 to 179; these read FFLILVMAGFSFFVALFGMRL and YVYFLVVSINCLFFVVIFLLM. Residues 180–231 form the HAMP domain; it reads KKTRSSIDEIVHVMNDMSRGDLTYRTIPSNDEVGKMQSSIIAMGAGVSALIE. The 237-residue stretch at 236–472 folds into the Methyl-accepting transducer domain; sequence IQGDLFNSAG…DMLDNANIIR (237 aa).

This sequence belongs to the methyl-accepting chemotaxis (MCP) protein family.

It is found in the membrane. The protein operates within hydrocarbon metabolism; alkane degradation. In terms of biological role, chemotactic-signal transducers respond to changes in the concentration of attractants and repellents in the environment, transduce a signal from the outside to the inside of the cell, and facilitate sensory adaptation through the variation of the level of methylation. The polypeptide is Putative methyl-accepting chemotaxis AlkN (alkN) (Ectopseudomonas oleovorans (Pseudomonas oleovorans)).